The sequence spans 310 residues: Dihydroorotate dehydrogenase B (NAD(+)), catalytic subunit (310 aa).

Residues Ser-19 and 43 to 44 (KA) each bind FMN. Residues Lys-43 and 67–71 (NAIGL) contribute to the substrate site. Residues Asn-97 and Asn-125 each contribute to the FMN site. Asn-125 contacts substrate. The Nucleophile role is filled by Cys-128. The FMN site is built by Lys-163 and Ile-189. Position 190-191 (190-191 (NT)) interacts with substrate. Residues Gly-215, 241–242 (GG), and 263–264 (GT) contribute to the FMN site.

The protein belongs to the dihydroorotate dehydrogenase family. Type 1 subfamily. In terms of assembly, heterotetramer of 2 PyrK and 2 PyrD type B subunits. Requires FMN as cofactor.

The protein resides in the cytoplasm. It catalyses the reaction (S)-dihydroorotate + NAD(+) = orotate + NADH + H(+). Its pathway is pyrimidine metabolism; UMP biosynthesis via de novo pathway; orotate from (S)-dihydroorotate (NAD(+) route): step 1/1. Its function is as follows. Catalyzes the conversion of dihydroorotate to orotate with NAD(+) as electron acceptor. This chain is Dihydroorotate dehydrogenase B (NAD(+)), catalytic subunit (pyrD), found in Bacillus pumilus (strain SAFR-032).